We begin with the raw amino-acid sequence, 270 residues long: Sulfur carrier protein FdhD (270 aa).

The Cysteine persulfide intermediate role is filled by Cys-116. 253–258 (FAREGK) is a Mo-bis(molybdopterin guanine dinucleotide) binding site.

This sequence belongs to the FdhD family.

The protein resides in the cytoplasm. In terms of biological role, required for formate dehydrogenase (FDH) activity. Acts as a sulfur carrier protein that transfers sulfur from IscS to the molybdenum cofactor prior to its insertion into FDH. The polypeptide is Sulfur carrier protein FdhD (Haemophilus influenzae (strain 86-028NP)).